We begin with the raw amino-acid sequence, 217 residues long: Adenylate kinase (217 aa).

11–16 provides a ligand contact to ATP; it reads GAGKGT. The interval 31–60 is NMP; sequence STGDMFREAMANETPVGLEAKSYIDKGNLV. Residues T32, R37, 58-60, 86-89, and Q93 each bind AMP; these read NLV and GFPR. Residues 127–165 are LID; it reads ARYICKKCGATYNKISNPTKVEGTCDRCGGHEFFQREDD. R128 is a binding site for ATP. Zn(2+) contacts are provided by C131 and C134. ATP is bound at residue 137 to 138; sequence TY. Zn(2+)-binding residues include C151 and C154. Residues R162 and R173 each coordinate AMP. ATP is bound at residue Q201.

It belongs to the adenylate kinase family. In terms of assembly, monomer.

The protein localises to the cytoplasm. The enzyme catalyses AMP + ATP = 2 ADP. It functions in the pathway purine metabolism; AMP biosynthesis via salvage pathway; AMP from ADP: step 1/1. Its function is as follows. Catalyzes the reversible transfer of the terminal phosphate group between ATP and AMP. Plays an important role in cellular energy homeostasis and in adenine nucleotide metabolism. The chain is Adenylate kinase from Lactobacillus johnsonii (strain CNCM I-12250 / La1 / NCC 533).